The primary structure comprises 288 residues: 4-hydroxy-3-methylbut-2-enyl diphosphate reductase (288 aa).

Cysteine 12 provides a ligand contact to [4Fe-4S] cluster. Histidine 42 and histidine 77 together coordinate (2E)-4-hydroxy-3-methylbut-2-enyl diphosphate. Dimethylallyl diphosphate is bound by residues histidine 42 and histidine 77. Isopentenyl diphosphate-binding residues include histidine 42 and histidine 77. [4Fe-4S] cluster is bound at residue cysteine 99. Position 127 (histidine 127) interacts with (2E)-4-hydroxy-3-methylbut-2-enyl diphosphate. Dimethylallyl diphosphate is bound at residue histidine 127. Residue histidine 127 coordinates isopentenyl diphosphate. Glutamate 129 (proton donor) is an active-site residue. Position 165 (threonine 165) interacts with (2E)-4-hydroxy-3-methylbut-2-enyl diphosphate. Cysteine 193 lines the [4Fe-4S] cluster pocket. Residues serine 221, serine 222, asparagine 223, and serine 265 each contribute to the (2E)-4-hydroxy-3-methylbut-2-enyl diphosphate site. Dimethylallyl diphosphate is bound by residues serine 221, serine 222, asparagine 223, and serine 265. Isopentenyl diphosphate contacts are provided by serine 221, serine 222, asparagine 223, and serine 265.

It belongs to the IspH family. Requires [4Fe-4S] cluster as cofactor.

It carries out the reaction isopentenyl diphosphate + 2 oxidized [2Fe-2S]-[ferredoxin] + H2O = (2E)-4-hydroxy-3-methylbut-2-enyl diphosphate + 2 reduced [2Fe-2S]-[ferredoxin] + 2 H(+). The enzyme catalyses dimethylallyl diphosphate + 2 oxidized [2Fe-2S]-[ferredoxin] + H2O = (2E)-4-hydroxy-3-methylbut-2-enyl diphosphate + 2 reduced [2Fe-2S]-[ferredoxin] + 2 H(+). It participates in isoprenoid biosynthesis; dimethylallyl diphosphate biosynthesis; dimethylallyl diphosphate from (2E)-4-hydroxy-3-methylbutenyl diphosphate: step 1/1. The protein operates within isoprenoid biosynthesis; isopentenyl diphosphate biosynthesis via DXP pathway; isopentenyl diphosphate from 1-deoxy-D-xylulose 5-phosphate: step 6/6. Functionally, catalyzes the conversion of 1-hydroxy-2-methyl-2-(E)-butenyl 4-diphosphate (HMBPP) into a mixture of isopentenyl diphosphate (IPP) and dimethylallyl diphosphate (DMAPP). Acts in the terminal step of the DOXP/MEP pathway for isoprenoid precursor biosynthesis. The polypeptide is 4-hydroxy-3-methylbut-2-enyl diphosphate reductase (Caldanaerobacter subterraneus subsp. tengcongensis (strain DSM 15242 / JCM 11007 / NBRC 100824 / MB4) (Thermoanaerobacter tengcongensis)).